Reading from the N-terminus, the 190-residue chain is Inosine triphosphate pyrophosphatase (190 aa).

Residue 8-13 (TGNANK) coordinates ITP. Residue glutamate 37 coordinates Mg(2+). ITP is bound by residues lysine 49, 65–66 (DT), lysine 82, 140–143 (FGWD), lysine 163, and 168–169 (HR).

It belongs to the HAM1 NTPase family. Homodimer. Requires Mg(2+) as cofactor. Mn(2+) serves as cofactor.

It localises to the cytoplasm. The protein resides in the nucleus. It carries out the reaction ITP + H2O = IMP + diphosphate + H(+). The enzyme catalyses dITP + H2O = dIMP + diphosphate + H(+). The catalysed reaction is XTP + H2O = XMP + diphosphate + H(+). In terms of biological role, pyrophosphatase that hydrolyzes non-canonical purine nucleotides such as inosine triphosphate (ITP), deoxyinosine triphosphate (dITP) or xanthosine 5'-triphosphate (XTP) to their respective monophosphate derivatives. The enzyme does not distinguish between the deoxy- and ribose forms. Probably excludes non-canonical purines from RNA and DNA precursor pools, thus preventing their incorporation into RNA and DNA and avoiding chromosomal lesions. In Batrachochytrium dendrobatidis (strain JAM81 / FGSC 10211) (Frog chytrid fungus), this protein is Inosine triphosphate pyrophosphatase.